The sequence spans 425 residues: Interferon-activable protein 211 (425 aa).

One can recognise a Pyrin domain in the interval 1-88 (MVNEYKRIVL…AEILKKERSE (88 aa)). A compositionally biased stretch (basic and acidic residues) spans 86-99 (RSEVTGETSLEKNG). Residues 86 to 223 (RSEVTGETSL…QNQNIPRGAV (138 aa)) are disordered. The span at 122–153 (TSATQEETSTAQAGTSTAQAGTSTAQAGTSTA) shows a compositional bias: low complexity. 4 consecutive repeat copies span residues 129 to 135 (TSTAQAG), 136 to 142 (TSTAQAG), 143 to 149 (TSTAQAG), and 150 to 156 (TSTAQKR). Positions 129–177 (TSTAQAGTSTAQAGTSTAQAGTSTAQKRKSMREEETGVKKSKAAKEPDQ) are 4 X 7 AA tandem repeats of T-S-T-A-Q-A-[GR]. Residues 159–176 (MREEETGVKKSKAAKEPD) are compositionally biased toward basic and acidic residues. Residues 190–206 (SPILHSSSSASSNILSA) show a composition bias toward low complexity. Residues 207 to 218 (KNQKSQPQNQNI) are compositionally biased toward polar residues. Residues 213–413 (PQNQNIPRGA…CGDHSFVKVT (201 aa)) enclose the HIN-200 domain.

This sequence belongs to the HIN-200 family. As to quaternary structure, interacts with HOXB2. In terms of tissue distribution, mononuclear phagocytes.

It localises to the nucleus. Inhibits cell growth via p53/TP53 and RB1-dependent and independent pathways. May work in synergy with TP53 to promote the transcription of CDKN1A/P21. This is Interferon-activable protein 211 from Mus musculus (Mouse).